The primary structure comprises 556 residues: Myb/SANT-like DNA-binding domain-containing protein 2 (556 aa).

Polar residues-rich tracts occupy residues methionine 1–leucine 10 and glycine 36–threonine 45. The disordered stretch occupies residues methionine 1–serine 82. The span at proline 56 to glycine 74 shows a compositional bias: gly residues. The 71-residue stretch at serine 99–arginine 169 folds into the Myb-like domain. The tract at residues proline 431–alanine 458 is disordered.

In Gallus gallus (Chicken), this protein is Myb/SANT-like DNA-binding domain-containing protein 2 (MSANTD2).